The chain runs to 853 residues: DNA mismatch repair protein MutS (853 aa).

614 to 621 (GPNMGGKS) lines the ATP pocket.

It belongs to the DNA mismatch repair MutS family.

Functionally, this protein is involved in the repair of mismatches in DNA. It is possible that it carries out the mismatch recognition step. This protein has a weak ATPase activity. The polypeptide is DNA mismatch repair protein MutS (Escherichia coli (strain SE11)).